The chain runs to 160 residues: Nucleotide-binding protein Smal_3487 (160 aa).

It belongs to the YajQ family.

Functionally, nucleotide-binding protein. The chain is Nucleotide-binding protein Smal_3487 from Stenotrophomonas maltophilia (strain R551-3).